The chain runs to 166 residues: MTESTSRRPAYARLLDRAVRILAVRDHSEQELRRKLAAPIMGKNGPEEIDATAEDYERVIAWCHEHGYLDDSRFVARFIASRSRKGYGPARIRQELNQKGISREATEKAMRECDIDWCALVRDQATRKYGEPLPTVFSEKVKIQRFLLYRGYLMEDIQDIWLNFAD.

Belongs to the RecX family.

It localises to the cytoplasm. Modulates RecA activity. The chain is Regulatory protein RecX from Shigella sonnei (strain Ss046).